Consider the following 239-residue polypeptide: Ribonuclease PH (239 aa).

Residues Arg87 and Gly125–Arg127 contribute to the phosphate site.

It belongs to the RNase PH family. In terms of assembly, homohexameric ring arranged as a trimer of dimers.

It catalyses the reaction tRNA(n+1) + phosphate = tRNA(n) + a ribonucleoside 5'-diphosphate. Functionally, phosphorolytic 3'-5' exoribonuclease that plays an important role in tRNA 3'-end maturation. Removes nucleotide residues following the 3'-CCA terminus of tRNAs; can also add nucleotides to the ends of RNA molecules by using nucleoside diphosphates as substrates, but this may not be physiologically important. Probably plays a role in initiation of 16S rRNA degradation (leading to ribosome degradation) during starvation. The sequence is that of Ribonuclease PH from Pseudomonas aeruginosa (strain LESB58).